A 76-amino-acid chain; its full sequence is MAVEKFETALKKLEDVVRKLEGGDLSLDDSLKAFEEGVKMASFCTKKLDEAEKKVELLLKKKDGTFVREDFRLDDE.

It belongs to the XseB family. In terms of assembly, heterooligomer composed of large and small subunits.

The protein localises to the cytoplasm. It carries out the reaction Exonucleolytic cleavage in either 5'- to 3'- or 3'- to 5'-direction to yield nucleoside 5'-phosphates.. Its function is as follows. Bidirectionally degrades single-stranded DNA into large acid-insoluble oligonucleotides, which are then degraded further into small acid-soluble oligonucleotides. The chain is Exodeoxyribonuclease 7 small subunit from Geobacter sulfurreducens (strain ATCC 51573 / DSM 12127 / PCA).